A 390-amino-acid chain; its full sequence is Flap endonuclease 1 (390 aa).

Positions 1–111 (MGIKGLAKLL…GELLKRREKR (111 aa)) are N-domain. A Mg(2+)-binding site is contributed by D34. Residues R47 and R77 each contribute to the DNA site. Residues D93, E165, E167, D186, and D188 each contribute to the Mg(2+) site. An I-domain region spans residues 129–260 (EQDKQSKRLV…KTALKLIREH (132 aa)). E165 contributes to the DNA binding site. The DNA site is built by G238 and D240. D240 provides a ligand contact to Mg(2+). A disordered region spans residues 342–390 (KPQSRMDSFFKVKANPEGDKKKAEKRKAELAASRGKGKKGKGGGGFKKK). An interaction with PCNA region spans residues 343 to 351 (PQSRMDSFF). The segment covering 349 to 370 (SFFKVKANPEGDKKKAEKRKAE) has biased composition (basic and acidic residues). Residues 376–390 (GKGKKGKGGGGFKKK) are compositionally biased toward basic residues.

This sequence belongs to the XPG/RAD2 endonuclease family. FEN1 subfamily. In terms of assembly, interacts with PCNA. Three molecules of FEN1 bind to one PCNA trimer with each molecule binding to one PCNA monomer. PCNA stimulates the nuclease activity without altering cleavage specificity. It depends on Mg(2+) as a cofactor. Post-translationally, phosphorylated. Phosphorylation upon DNA damage induces relocalization to the nuclear plasma.

Its subcellular location is the nucleus. It localises to the nucleolus. The protein localises to the nucleoplasm. The protein resides in the mitochondrion. Functionally, structure-specific nuclease with 5'-flap endonuclease and 5'-3' exonuclease activities involved in DNA replication and repair. During DNA replication, cleaves the 5'-overhanging flap structure that is generated by displacement synthesis when DNA polymerase encounters the 5'-end of a downstream Okazaki fragment. It enters the flap from the 5'-end and then tracks to cleave the flap base, leaving a nick for ligation. Also involved in the long patch base excision repair (LP-BER) pathway, by cleaving within the apurinic/apyrimidinic (AP) site-terminated flap. Acts as a genome stabilization factor that prevents flaps from equilibrating into structures that lead to duplications and deletions. Also possesses 5'-3' exonuclease activity on nicked or gapped double-stranded DNA, and exhibits RNase H activity. Also involved in replication and repair of rDNA and in repairing mitochondrial DNA. This Thalassiosira pseudonana (Marine diatom) protein is Flap endonuclease 1.